The primary structure comprises 729 residues: MNPFQKNESKETLFSPVSTEEMLPGPPSPPKKSTPKLFGSSYPLSIAFIVVNEFCERFSYYGMKAVLTLYFLYFLHWNEDTSTSVYHAFSSLCYFTPILGAAIADSWLGKFKTIIYLSLVYVLGHVFKSLGAIPILGGKMLHTILSLVGLSLIALGTGGIKPCVAAFGGDQFEEEHAEARTRYFSVFYLSINAGSLISTFITPMLRGDVKCFGEDCYALAFGIPGLLMVLALVVFAMGSKMYRKPPPEGNIVAQVTKCIWFAICNRFRNRSEDIPKRQHWLDWAAEKYPKHLIMDVKALTRILFLYIPLPMFWALLDQQGSRWTLQANKMDGDLGFFVLQPDQMQVLNPFLVLVFIPLFDLVIYRLISKCGVNFSSLRKMAVGMILACLAFAVAALVEIKINGMIHPQPASQEIFLQVLNLADGEIEVTVQGNRNNPLLVESISSFQNTTHYSKLRLETKSQDLHFHLKYNNLSVHNEYSVEEKNCYQLVVHENGESLSSMLVKDTGIKPANGMTAIRFINTLHKDMNISLDANAPLSVGKDYGVSEYRTVQRGKYPAVHCETEDNVFSLNLGQLDFGTTYLFVITNITNRGLQAWKAEDIPANKLSIAWQLPQYVLVTAAEVMFSVTGLEFSYSQAPSSMKSVLQAAWLLTVAVGNIIVLIVAQFSGLVQWAEFVLFSCLLLVVCLIFSVMGYYYVPLKSEGIHEATEKQIPHIQGNMINLETKNTRL.

A disordered region spans residues 1-34; the sequence is MNPFQKNESKETLFSPVSTEEMLPGPPSPPKKST. The Cytoplasmic segment spans residues 1–57; the sequence is MNPFQKNESKETLFSPVSTEEMLPGPPSPPKKSTPKLFGSSYPLSIAFIVVNEFCER. Serine 9 bears the Phosphoserine mark. Threonine 12 bears the Phosphothreonine mark. Position 28 is a phosphoserine (serine 28). Residues 58-78 form a helical membrane-spanning segment; sequence FSYYGMKAVLTLYFLYFLHWN. Topologically, residues 79 to 87 are extracellular; it reads EDTSTSVYH. The helical transmembrane segment at 88-108 threads the bilayer; it reads AFSSLCYFTPILGAAIADSWL. Residues 109–113 lie on the Cytoplasmic side of the membrane; the sequence is GKFKT. A helical transmembrane segment spans residues 114–134; the sequence is IIYLSLVYVLGHVFKSLGAIP. At 135–139 the chain is on the extracellular side; sequence ILGGK. The chain crosses the membrane as a helical span at residues 140 to 160; it reads MLHTILSLVGLSLIALGTGGI. At 161–183 the chain is on the cytoplasmic side; that stretch reads KPCVAAFGGDQFEEEHAEARTRY. Residues 184–204 form a helical membrane-spanning segment; it reads FSVFYLSINAGSLISTFITPM. The Extracellular segment spans residues 205-217; sequence LRGDVKCFGEDCY. The helical transmembrane segment at 218-238 threads the bilayer; sequence ALAFGIPGLLMVLALVVFAMG. Topologically, residues 239–295 are cytoplasmic; sequence SKMYRKPPPEGNIVAQVTKCIWFAICNRFRNRSEDIPKRQHWLDWAAEKYPKHLIMD. The helical transmembrane segment at 296–316 threads the bilayer; the sequence is VKALTRILFLYIPLPMFWALL. Topologically, residues 317-343 are extracellular; it reads DQQGSRWTLQANKMDGDLGFFVLQPDQ. A helical transmembrane segment spans residues 344-364; the sequence is MQVLNPFLVLVFIPLFDLVIY. Topologically, residues 365 to 380 are cytoplasmic; the sequence is RLISKCGVNFSSLRKM. The chain crosses the membrane as a helical span at residues 381 to 401; sequence AVGMILACLAFAVAALVEIKI. Residues 402 to 611 lie on the Extracellular side of the membrane; it reads NGMIHPQPAS…PANKLSIAWQ (210 aa). Residues 402 to 611 are extracellular domain (ECD); that stretch reads NGMIHPQPAS…PANKLSIAWQ (210 aa). Residues asparagine 448, asparagine 472, asparagine 528, and asparagine 587 are each glycosylated (N-linked (GlcNAc...) asparagine). A helical membrane pass occupies residues 612 to 632; it reads LPQYVLVTAAEVMFSVTGLEF. The Cytoplasmic portion of the chain corresponds to 633–643; that stretch reads SYSQAPSSMKS. A helical transmembrane segment spans residues 644 to 664; sequence VLQAAWLLTVAVGNIIVLIVA. Residues 665-674 are Extracellular-facing; sequence QFSGLVQWAE. A helical membrane pass occupies residues 675 to 695; that stretch reads FVLFSCLLLVVCLIFSVMGYY. The Cytoplasmic portion of the chain corresponds to 696 to 729; that stretch reads YVPLKSEGIHEATEKQIPHIQGNMINLETKNTRL.

The protein belongs to the major facilitator superfamily. Proton-dependent oligopeptide transporter (POT/PTR) (TC 2.A.17) family. In terms of assembly, interacts (via extracellular domain region) with trypsin. As to expression, expressed in kidney brush border cells (at protein level). Highly expressed in macrophages.

The protein resides in the apical cell membrane. The protein localises to the cytoplasmic vesicle. It is found in the phagosome membrane. It localises to the cell membrane. The catalysed reaction is N-acetyl-D-muramoyl-L-alanyl-D-isoglutamine(out) + 3 H(+)(out) = N-acetyl-D-muramoyl-L-alanyl-D-isoglutamine(in) + 3 H(+)(in). The enzyme catalyses a dipeptide(out) + 2 H(+)(out) = a dipeptide(in) + 2 H(+)(in). It carries out the reaction glycyl-L-leucine(out) + 2 H(+)(out) = glycyl-L-leucine(in) + 2 H(+)(in). It catalyses the reaction glycyl-L-lysine(out) + 2 H(+)(out) = glycyl-L-lysine(in) + 2 H(+)(in). The catalysed reaction is glycyl-L-glutamate(out) + 3 H(+)(out) = glycyl-L-glutamate(in) + 3 H(+)(in). The enzyme catalyses L-alanyl-L-alanine(out) + 2 H(+)(out) = L-alanyl-L-alanine(in) + 2 H(+)(in). It carries out the reaction an L-amino acid tripeptide(out) + 2 H(+)(out) = an L-amino acid tripeptide(in) + 2 H(+)(in). It catalyses the reaction carnosine(out) + 2 H(+)(out) = carnosine(in) + 2 H(+)(in). Its function is as follows. Proton-coupled amino-acid transporter that transports oligopeptides of 2 to 4 amino acids with a preference for dipeptides. Transports neutral and anionic dipeptides with a proton to peptide stoichiometry of 2:1 or 3:1. In kidney, involved in the absorption of circulating di- and tripeptides from the glomerular filtrate. Can also transport beta-lactam antibiotics, such as the aminocephalosporin cefadroxil, and other antiviral and anticancer drugs. Transports the dipeptide-like aminopeptidase inhibitor bestatin. Also able to transport carnosine. Involved in innate immunity by promoting the detection of microbial pathogens by NOD-like receptors (NLRs). Mediates transport of bacterial peptidoglycans across the plasma membrane or, in macrophages, the phagosome membrane: catalyzes the transport of certain bacterial peptidoglycans, such as muramyl dipeptide (MDP), the NOD2 ligand. In Mus musculus (Mouse), this protein is Solute carrier family 15 member 2.